A 143-amino-acid chain; its full sequence is Transcription antitermination protein NusB (143 aa).

Belongs to the NusB family.

Involved in transcription antitermination. Required for transcription of ribosomal RNA (rRNA) genes. Binds specifically to the boxA antiterminator sequence of the ribosomal RNA (rrn) operons. In Clostridium botulinum (strain ATCC 19397 / Type A), this protein is Transcription antitermination protein NusB.